Consider the following 57-residue polypeptide: Mambaquaretin-6 (57 aa).

The region spanning 5 to 55 (CNLPVKPGPCSGFFSAFYYSQKTNKCHSFTYGGCRGPGNRFRTIEECRRTC) is the BPTI/Kunitz inhibitor domain. 3 cysteine pairs are disulfide-bonded: cysteine 5-cysteine 55, cysteine 14-cysteine 38, and cysteine 30-cysteine 51.

It belongs to the venom Kunitz-type family. In terms of tissue distribution, expressed by the venom gland.

The protein resides in the secreted. Its function is as follows. Interacts with vasopressin V2 receptor (V2R/AVPR2), probably in a selective manner. Inhibits vasopressin binding human V2R in the nanomolar range (Ki=21.5 nM), and also moderately inhibits vasopressin-induced cAMP production (IC(50)=574 nM). In vivo, intraperitoneal injection of this protein into rats increases diuresis by 2-fold, without any loss of electrolytes. The sequence is that of Mambaquaretin-6 from Dendroaspis viridis (Western green mamba).